Consider the following 664-residue polypeptide: Phosphomethylpyrimidine synthase (664 aa).

Polar residues-rich tracts occupy residues 1-10 (MSTEPLSINP) and 17-27 (SATQEPSTSSK). Positions 1 to 37 (MSTEPLSINPLSAKPLSATQEPSTSSKPSRREQRAAA) are disordered. Substrate is bound by residues Asn-261, Met-290, Tyr-319, His-355, 375–377 (SRG), 416–419 (DGLR), and Glu-455. His-459 provides a ligand contact to Zn(2+). Tyr-482 contacts substrate. Zn(2+) is bound at residue His-523. [4Fe-4S] cluster-binding residues include Cys-603, Cys-606, and Cys-611.

The protein belongs to the ThiC family. In terms of assembly, homodimer. It depends on [4Fe-4S] cluster as a cofactor.

It catalyses the reaction 5-amino-1-(5-phospho-beta-D-ribosyl)imidazole + S-adenosyl-L-methionine = 4-amino-2-methyl-5-(phosphooxymethyl)pyrimidine + CO + 5'-deoxyadenosine + formate + L-methionine + 3 H(+). It functions in the pathway cofactor biosynthesis; thiamine diphosphate biosynthesis. In terms of biological role, catalyzes the synthesis of the hydroxymethylpyrimidine phosphate (HMP-P) moiety of thiamine from aminoimidazole ribotide (AIR) in a radical S-adenosyl-L-methionine (SAM)-dependent reaction. The sequence is that of Phosphomethylpyrimidine synthase from Pectobacterium atrosepticum (strain SCRI 1043 / ATCC BAA-672) (Erwinia carotovora subsp. atroseptica).